Consider the following 286-residue polypeptide: MTHNHDPYSDAKELAGLTLGKATDYQAEYDASLLQGVPRSLNRNAINLTAESLPFHGADIWTAYELSWLNAKGKPMVAIADIQLSHESQNLIESKSFKLYLNSFNQTKFDNIDAVQKTLVQDLSECAQGQVTVKIIEPKSFGIQRVVELPGTCIDDLDIEVSDYDFNPDYLENSTDDKQIVAETLNSNLLKSNCLITSQPDWGSVMIRYQGPKIDREKLLRYLISFRQHNEFHEQCVERIFVDLKHYCHCTKLTVYARYTRRGGLDINPYRSDFEHPGESHRLARQ.

92 to 94 (IES) contacts substrate. 94-95 (SK) is an NADPH binding site. Cysteine 194 serves as the catalytic Thioimide intermediate. The active-site Proton donor is the aspartate 201. Residue 233–234 (HE) participates in substrate binding. 262 to 263 (RG) serves as a coordination point for NADPH.

Belongs to the GTP cyclohydrolase I family. QueF type 2 subfamily. Homodimer.

It is found in the cytoplasm. It catalyses the reaction 7-aminomethyl-7-carbaguanine + 2 NADP(+) = 7-cyano-7-deazaguanine + 2 NADPH + 3 H(+). It participates in tRNA modification; tRNA-queuosine biosynthesis. In terms of biological role, catalyzes the NADPH-dependent reduction of 7-cyano-7-deazaguanine (preQ0) to 7-aminomethyl-7-deazaguanine (preQ1). The sequence is that of NADPH-dependent 7-cyano-7-deazaguanine reductase from Shewanella sp. (strain MR-4).